The sequence spans 84 residues: U8-theraphotoxin-Hhn1d (84 aa).

An N-terminal signal peptide occupies residues 1-21; it reads MKVVLIVCLVWVMAMMELVSC. 5 disulfide bridges follow: Cys-23–Cys-35, Cys-29–Cys-44, Cys-34–Cys-67, Cys-54–Cys-75, and Cys-69–Cys-81.

The protein belongs to the AVIT (prokineticin) family. In terms of tissue distribution, expressed by the venom gland.

It is found in the secreted. This is U8-theraphotoxin-Hhn1d from Cyriopagopus hainanus (Chinese bird spider).